We begin with the raw amino-acid sequence, 357 residues long: MKEKTRVAILYGGRSAEHDVSRLSAANVLKAIDRTRYEVVPIAISRDGRWRLQPSSEAGADGAGAQVPEDGVEVALLPGGKGRLVALTKNGEQPDPVDVVFPVLHGPFGEDGSVQGYAEVADVAYVGCGILASAAAMDKDVAKRLLREAGLAVARSVTVLKGDVGSFQEIAGALGLPFFAKPARQGSSFGVSKVHDRDGFEQAVETALRYDSKALIEEFVDGREIECSVLERADGSLTVSPPGEIIPADKHGFYTYEAKYFDAEGAVVKVPADVPADVVARTSEMAARAFRALGCEAMARVDFFLRADGSLLVNEVNTLPGFTDISMYAKALAAAGIGYSKVIDVLIEHALARHRAR.

In terms of domain architecture, ATP-grasp spans 143-348 (KRLLREAGLA…YSKVIDVLIE (206 aa)). 171–226 (AGALGLPFFAKPARQGSSFGVSKVHDRDGFEQAVETALRYDSKALIEEFVDGREIE) is a binding site for ATP. 3 residues coordinate Mg(2+): Asp-302, Glu-315, and Asn-317.

The protein belongs to the D-alanine--D-alanine ligase family. The cofactor is Mg(2+). Mn(2+) serves as cofactor.

The protein resides in the cytoplasm. It carries out the reaction 2 D-alanine + ATP = D-alanyl-D-alanine + ADP + phosphate + H(+). The protein operates within cell wall biogenesis; peptidoglycan biosynthesis. Functionally, cell wall formation. The sequence is that of D-alanine--D-alanine ligase A from Mesorhizobium japonicum (strain LMG 29417 / CECT 9101 / MAFF 303099) (Mesorhizobium loti (strain MAFF 303099)).